The chain runs to 445 residues: Trigger factor (445 aa).

Residues 164-249 (GDQVTFDFEG…VKKVEEAKLP (86 aa)) form the PPIase FKBP-type domain.

It belongs to the FKBP-type PPIase family. Tig subfamily.

It localises to the cytoplasm. The catalysed reaction is [protein]-peptidylproline (omega=180) = [protein]-peptidylproline (omega=0). Its function is as follows. Involved in protein export. Acts as a chaperone by maintaining the newly synthesized protein in an open conformation. Functions as a peptidyl-prolyl cis-trans isomerase. This Psychrobacter sp. (strain PRwf-1) protein is Trigger factor.